A 473-amino-acid chain; its full sequence is Ribulose bisphosphate carboxylase large chain (473 aa).

Residues N116 and T166 each contribute to the substrate site. K168 serves as the catalytic Proton acceptor. Residue K170 coordinates substrate. The Mg(2+) site is built by K194, D196, and E197. K194 carries the post-translational modification N6-carboxylysine. H287 acts as the Proton acceptor in catalysis. Substrate contacts are provided by R288, H320, and S372.

This sequence belongs to the RuBisCO large chain family. Type I subfamily. In terms of assembly, heterohexadecamer of 8 large chains and 8 small chains. Mg(2+) serves as cofactor.

It carries out the reaction 2 (2R)-3-phosphoglycerate + 2 H(+) = D-ribulose 1,5-bisphosphate + CO2 + H2O. The enzyme catalyses D-ribulose 1,5-bisphosphate + O2 = 2-phosphoglycolate + (2R)-3-phosphoglycerate + 2 H(+). RuBisCO catalyzes two reactions: the carboxylation of D-ribulose 1,5-bisphosphate, the primary event in carbon dioxide fixation, as well as the oxidative fragmentation of the pentose substrate. Both reactions occur simultaneously and in competition at the same active site. This chain is Ribulose bisphosphate carboxylase large chain, found in Nitrosospira sp. (strain TCH716).